We begin with the raw amino-acid sequence, 196 residues long: Putative AAA family ATPase L572 (196 aa).

32-39 (NAVNCKET) contributes to the ATP binding site.

Belongs to the AAA ATPase family.

This chain is Putative AAA family ATPase L572, found in Acanthamoeba polyphaga mimivirus (APMV).